We begin with the raw amino-acid sequence, 200 residues long: Glycerol-3-phosphate acyltransferase (200 aa).

5 helical membrane-spanning segments follow: residues 2 to 22, 51 to 71, 84 to 104, 114 to 134, and 159 to 179; these read FNIP…AVIV, KAAV…VLLA, AIAA…FFGF, LGVL…IWLV, and FFMP…LVLF.

The protein belongs to the PlsY family. As to quaternary structure, probably interacts with PlsX.

The protein resides in the cell inner membrane. It catalyses the reaction an acyl phosphate + sn-glycerol 3-phosphate = a 1-acyl-sn-glycero-3-phosphate + phosphate. The protein operates within lipid metabolism; phospholipid metabolism. Catalyzes the transfer of an acyl group from acyl-phosphate (acyl-PO(4)) to glycerol-3-phosphate (G3P) to form lysophosphatidic acid (LPA). This enzyme utilizes acyl-phosphate as fatty acyl donor, but not acyl-CoA or acyl-ACP. This Neisseria meningitidis serogroup C / serotype 2a (strain ATCC 700532 / DSM 15464 / FAM18) protein is Glycerol-3-phosphate acyltransferase.